The chain runs to 91 residues: Small ribosomal subunit protein uS17 (91 aa).

Belongs to the universal ribosomal protein uS17 family. As to quaternary structure, part of the 30S ribosomal subunit.

One of the primary rRNA binding proteins, it binds specifically to the 5'-end of 16S ribosomal RNA. In Malacoplasma penetrans (strain HF-2) (Mycoplasma penetrans), this protein is Small ribosomal subunit protein uS17.